A 642-amino-acid polypeptide reads, in one-letter code: Threonine--tRNA ligase (642 aa).

The region spanning 1 to 61 (MPVITLPDGS…DTDSELSIIT (61 aa)) is the TGS domain. The catalytic stretch occupies residues 243–534 (DHRKIGKQLD…LIEEYAGKFP (292 aa)). Positions 334, 385, and 511 each coordinate Zn(2+).

It belongs to the class-II aminoacyl-tRNA synthetase family. Homodimer. The cofactor is Zn(2+).

The protein resides in the cytoplasm. The catalysed reaction is tRNA(Thr) + L-threonine + ATP = L-threonyl-tRNA(Thr) + AMP + diphosphate + H(+). In terms of biological role, catalyzes the attachment of threonine to tRNA(Thr) in a two-step reaction: L-threonine is first activated by ATP to form Thr-AMP and then transferred to the acceptor end of tRNA(Thr). Also edits incorrectly charged L-seryl-tRNA(Thr). The chain is Threonine--tRNA ligase from Shewanella sediminis (strain HAW-EB3).